A 59-amino-acid polypeptide reads, in one-letter code: U-actitoxin-Aer2a (59 aa).

Post-translationally, contains 5 disulfide bonds.

The protein resides in the secreted. The protein localises to the nematocyst. This is U-actitoxin-Aer2a from Anemonia erythraea (Sea anemone).